A 158-amino-acid chain; its full sequence is Phosphopantetheine adenylyltransferase (158 aa).

Thr10 lines the substrate pocket. Residues 10–11 (TF) and His18 contribute to the ATP site. Positions 42, 74, and 88 each coordinate substrate. ATP is bound by residues 89-91 (GIR), Glu99, and 124-130 (WRYLSST).

Belongs to the bacterial CoaD family. As to quaternary structure, homohexamer. The cofactor is Mg(2+).

The protein localises to the cytoplasm. It carries out the reaction (R)-4'-phosphopantetheine + ATP + H(+) = 3'-dephospho-CoA + diphosphate. Its pathway is cofactor biosynthesis; coenzyme A biosynthesis; CoA from (R)-pantothenate: step 4/5. Its function is as follows. Reversibly transfers an adenylyl group from ATP to 4'-phosphopantetheine, yielding dephospho-CoA (dPCoA) and pyrophosphate. This chain is Phosphopantetheine adenylyltransferase, found in Actinobacillus pleuropneumoniae serotype 3 (strain JL03).